We begin with the raw amino-acid sequence, 172 residues long: Protein CapG (172 aa).

Belongs to the transferase hexapeptide repeat family.

The protein operates within capsule biogenesis; capsule polysaccharide biosynthesis. Functionally, required for the biosynthesis of type 1 capsular polysaccharide. The chain is Protein CapG (capG) from Staphylococcus aureus.